The chain runs to 307 residues: MNAYSVSLDFTKPSLFTRITLSSQIPLTMATTVNKTVRVAAAQMTSVNDLMTNFATCSRLVQEAALAGAKLICFPENFSFVGDKEGESVKIAEPLDGPVMERYCSLARDSNIWLSLGGFQERFDDTHLCNTHVVIDDAGMIRDTYQKMHLFDVDVPGGSSYKESSFTVPGTKIVSVDSPVGRLGLTVCYDLRFPKIYQQLRFEQKAQVLLVPSAFTKVTGEAHWEILLRARAIETQCYVIAAAQAGKHNEKRESYGDTLIIDPWGTVVGRLPDRVSTGIVVADIDFSLIDSVRTKMPIDKQRVSIDL.

A chloroplast-targeting transit peptide spans 1-36 (MNAYSVSLDFTKPSLFTRITLSSQIPLTMATTVNKT). The 250-residue stretch at 37 to 286 (VRVAAAQMTS…TGIVVADIDF (250 aa)) folds into the CN hydrolase domain. The active-site Proton acceptor is the E76. K147 acts as the Proton donor in catalysis. The Nucleophile role is filled by C188.

Belongs to the nitrilase superfamily. NIT1/NIT2 family.

It localises to the plastid. It is found in the chloroplast. The protein localises to the cytoplasm. The enzyme catalyses N-(4-oxoglutaryl)-L-cysteinylglycine + H2O = L-cysteinylglycine + 2-oxoglutarate. It carries out the reaction N-(4-carboxy-4-oxobutanoyl)-L-ethylglycylglycine + H2O = N-(2-aminobutanoyl)glycine + 2-oxoglutarate. In terms of biological role, catalyzes the hydrolysis of the amide bond in N-(4-oxoglutarate)-L-cysteinylglycine (deaminated glutathione), a metabolite repair reaction to dispose of the harmful deaminated glutathione. Possesses amidase activity toward deaminated ophthalmate in vitro. This Arabidopsis thaliana (Mouse-ear cress) protein is Deaminated glutathione amidase, chloroplastic/cytosolic.